Here is a 325-residue protein sequence, read N- to C-terminus: NADH-quinone oxidoreductase subunit H (325 aa).

The next 9 helical transmembrane spans lie at 11-31 (ILLT…CGAF), 50-69 (SRVG…KMFF), 81-101 (LIFT…FAIV), 114-134 (IGIL…LFAG), 154-174 (LSYE…AGSF), 186-206 (LWNI…GVAV), 237-257 (FFVG…TLFF), 265-285 (LPPF…FILV), and 304-324 (ICLP…LYHA).

The protein belongs to the complex I subunit 1 family. In terms of assembly, NDH-1 is composed of 13 different subunits. Subunits NuoA, H, J, K, L, M, N constitute the membrane sector of the complex.

It is found in the cell inner membrane. The catalysed reaction is a quinone + NADH + 5 H(+)(in) = a quinol + NAD(+) + 4 H(+)(out). In terms of biological role, NDH-1 shuttles electrons from NADH, via FMN and iron-sulfur (Fe-S) centers, to quinones in the respiratory chain. The immediate electron acceptor for the enzyme in this species is believed to be ubiquinone. Couples the redox reaction to proton translocation (for every two electrons transferred, four hydrogen ions are translocated across the cytoplasmic membrane), and thus conserves the redox energy in a proton gradient. This subunit may bind ubiquinone. The protein is NADH-quinone oxidoreductase subunit H of Edwardsiella ictaluri (strain 93-146).